An 885-amino-acid chain; its full sequence is MLIELQQIVKSGLVRNGAKHCTKRSLLCSNASVIASKRFQGSFAPGQQQPLNPLAKPIEQDRDAIIRILSSIGSRREVEQYLRYFTSFEAQRFAIIKVGGAIITDELDTLAQSLAFLNHVGLYPIVVHGAGPQLNKILASRNVEPEYSDGIRITDAETLSVARKVFLEENAKLVDALEKLGTRARPITGGVFQAEYLDKEKYKYVGKIVKVNKAPIEHSIRAGTLPILTSMAETASGQLLNVNADITAGELARVLKPLKVVYLNEKGGLINGETKKKISSIYLDREYDGLMKQPWVKYGTKLKIKEIKELLDTLPRTSSVAIISTKDLQKELFTESGAGTLISRGFVINKHDSLDSIPDAALENLIIQKNSLAAPSESLKQFKDTLKDRKLRIYSDSFNESVAIVDTTDSSLPVLLAFGAADNNWLNNVVDSILTTLKADFPSLLWRLQPSAKNLEWFFSKSEGTLFANNFYYFWYGVKDLNKISKFIQSDKPFADAIIQTQSTKPPTASSTTNNPSSSQINQKRSYSTSSLFSKNKKMNRSLFLKGGKRFFSAEAQKTQKPLKAVSSKPAKVVLLGARGYTGKNLIGLINTHPYLELSHVSSRELEGTKLPGYTKKEIQYVNLSTDDVKKLEEEGAVDAWVMALPNGVCKPYVDALTSANGKSVIVDLSADYRFEPSWQYGLPELNDREALRNSKRISNPGCYATGSQVGLTPILSLIDGQPSIFGVSGYSGAGTKPSPKNDLNVLTNNLIPYSLTDHIHEREISYRLKQPVAFIPHVAQWFQGITLTINVPLKKSITSRELRNLYQDRYNGEPLIHVQGDVPLVKDNAHKHHVSVGGFGVHSSGKRAVIVVTIDNLLKGAATQALQNLNLSCGYDEYAGIHLD.

The transit peptide at 1–59 (MLIELQQIVKSGLVRNGAKHCTKRSLLCSNASVIASKRFQGSFAPGQQQPLNPLAKPIE) directs the protein to the mitochondrion. In terms of domain architecture, N-acetyltransferase spans 346 to 499 (FVINKHDSLD…SDKPFADAII (154 aa)). The segment covering 503 to 523 (STKPPTASSTTNNPSSSQINQ) has biased composition (low complexity). A disordered region spans residues 503-532 (STKPPTASSTTNNPSSSQINQKRSYSTSSL). Cysteine 703 is a catalytic residue.

This sequence in the N-terminal section; belongs to the acetylglutamate kinase family. In the C-terminal section; belongs to the NAGSA dehydrogenase family. Post-translationally, the protein precursor is probably cleaved into the two biologically active enzymes, the kinase and the reductase.

The protein resides in the mitochondrion. The enzyme catalyses N-acetyl-L-glutamate 5-semialdehyde + phosphate + NADP(+) = N-acetyl-L-glutamyl 5-phosphate + NADPH + H(+). The catalysed reaction is N-acetyl-L-glutamate + ATP = N-acetyl-L-glutamyl 5-phosphate + ADP. Its pathway is amino-acid biosynthesis; L-arginine biosynthesis; N(2)-acetyl-L-ornithine from L-glutamate: step 2/4. It participates in amino-acid biosynthesis; L-arginine biosynthesis; N(2)-acetyl-L-ornithine from L-glutamate: step 3/4. The kinase activity is inhibited by arginine. In Schizosaccharomyces pombe (strain 972 / ATCC 24843) (Fission yeast), this protein is Protein arg11, mitochondrial (arg11).